A 156-amino-acid chain; its full sequence is Envelope glycoprotein L (156 aa).

The N-terminal stretch at Met-1–Gly-16 is a signal peptide. One can recognise a gL alphaherpesvirus-type domain in the interval Glu-50–Glu-156. Cys-71 and Cys-95 are joined by a disulfide.

It belongs to the herpesviridae glycoprotein L (gL) family. Alphaherpesvirinae gL subfamily. Interacts with glycoprotein H (gH); this interaction is necessary for the correct processing and cell surface expression of gH. The heterodimer gH/gL seems to interact with gB trimers during fusion. Post-translationally, O-glycosylated, and sialylated.

It is found in the virion membrane. It localises to the host cell membrane. Its subcellular location is the host Golgi apparatus. The protein localises to the host trans-Golgi network. Functionally, the heterodimer glycoprotein H-glycoprotein L is required for the fusion of viral and plasma membranes leading to virus entry into the host cell. Acts as a functional inhibitor of gH and maintains gH in an inhibited form. Upon binding to host integrins, gL dissociates from gH leading to activation of the viral fusion glycoproteins gB and gH. In Suid herpesvirus 1 (strain Indiana-Funkhauser / Becker) (SuHV-1), this protein is Envelope glycoprotein L.